Here is a 195-residue protein sequence, read N- to C-terminus: Thymidine kinase (195 aa).

ATP is bound by residues 15-22 (GSMFSGKS) and 88-91 (DEVQ). The active-site Proton acceptor is the Glu-89. Phe-120 provides a ligand contact to substrate. 2 residues coordinate Zn(2+): Cys-145 and Cys-148. Residues 170–174 (IILVG) and Tyr-179 contribute to the substrate site. Residues Cys-183 and Cys-186 each coordinate Zn(2+).

Belongs to the thymidine kinase family. As to quaternary structure, homotetramer.

The protein localises to the cytoplasm. It carries out the reaction thymidine + ATP = dTMP + ADP + H(+). This is Thymidine kinase from Bacillus cereus (strain ATCC 14579 / DSM 31 / CCUG 7414 / JCM 2152 / NBRC 15305 / NCIMB 9373 / NCTC 2599 / NRRL B-3711).